Here is a 150-residue protein sequence, read N- to C-terminus: Ribosome maturation factor RimP (150 aa).

This sequence belongs to the RimP family.

Its subcellular location is the cytoplasm. Functionally, required for maturation of 30S ribosomal subunits. This is Ribosome maturation factor RimP from Methylococcus capsulatus (strain ATCC 33009 / NCIMB 11132 / Bath).